The following is a 1614-amino-acid chain: Protein scribble homolog (1614 aa).

The sufficient for targeting to adherens junction and to inhibit cell proliferation stretch occupies residues 1 to 809; sequence MLKCIPLWRC…MRLWRERMVE (809 aa). LRR repeat units lie at residues 11 to 34, 35 to 58, 59 to 81, 83 to 105, 107 to 127, 128 to 150, 151 to 173, 174 to 196, 197 to 219, 221 to 242, 243 to 265, 267 to 288, 289 to 311, 312 to 334, 336 to 357, 359 to 380, and 382 to 405; these read NRHV…IYRY, SRSL…FFRL, LNLR…VANF, QLVE…KFCK, LEIA…FTQL, RSLA…VGNL, ANLV…LSFL, VKLE…LGAL, PNLR…LGNL, RLVC…LGGL, LLLT…IGQL, QLSI…IGDC, ENLS…LGKL, TKLT…IGGC, ALSV…LAHT, ELHV…LTHL, and LKAL…DDAQ. Ser-37 carries the phosphoserine modification. Residue Thr-378 is modified to Phosphothreonine. 3 disordered regions span residues 417-441, 462-608, and 636-692; these read PQQP…SDAP, GAAA…RLIR, and AQPD…VVSA. Polar residues predominate over residues 428–437; it reads GLQSSPSESW. Thr-475 carries the post-translational modification Phosphothreonine. Residues 479–494 are compositionally biased toward basic and acidic residues; that stretch reads SELKVMKRGVEERRGE. Over residues 516-533 the composition is skewed to polar residues; that stretch reads TESGLSEDSQPSTGTASQ. The segment covering 548–557 has biased composition (low complexity); the sequence is QQEAAPNAQE. Positions 662 to 686 are enriched in acidic residues; it reads EEEDEEDEEEDEEEEEVAVAEEDKE. A coiled-coil region spans residues 664 to 691; sequence EDEEDEEEDEEEEEVAVAEEDKEEAVVS. Phosphoserine is present on residues Ser-699 and Ser-755. The interaction with ARHGEF7 stretch occupies residues 708-1219; that stretch reads IEPARIEEEE…SLESVSSIDR (512 aa). The PDZ 1 domain occupies 719 to 806; sequence TLTIVRQTGG…TVQMRLWRER (88 aa). The interval 719 to 1184 is required for interaction with VIM; the sequence is TLTIVRQTGG…TVLVCDGFDT (466 aa). Thr-817 is modified (phosphothreonine). Phosphoserine occurs at positions 826, 866, and 930. Residues 853 to 941 form the PDZ 2 domain; it reads VACLVRSEKG…TIALLLEREA (89 aa). The tract at residues 940–971 is disordered; it reads EAGGPLPPSPLPHSPPPPVTAPSTVVTASPGE. Over residues 944 to 959 the composition is skewed to pro residues; sequence PLPPSPLPHSPPPPVT. Residues 960–969 show a composition bias toward low complexity; that stretch reads APSTVVTASP. PDZ domains lie at 994 to 1083 and 1090 to 1178; these read EICL…RRDP and ELCI…TVLV. A phosphoserine mark is found at Ser-1130, Ser-1210, Ser-1213, Ser-1216, Ser-1222, Ser-1260, Ser-1268, and Ser-1271. The disordered stretch occupies residues 1214 to 1448; sequence VSSIDRELSP…LPDRALSPAE (235 aa). Basic and acidic residues predominate over residues 1217-1232; it reads IDRELSPEGCGKEKEP. Thr-1304 carries the phosphothreonine modification. Ser-1310 bears the Phosphoserine mark. A compositionally biased stretch (basic and acidic residues) spans 1315–1327; that stretch reads SFRERQKYFELEV. Phosphoserine is present on Ser-1340. Residues 1341 to 1368 adopt a coiled-coil conformation; it reads LVGADDLRKMQEEEARKLQQKRAQLMRE. Residues 1345-1357 show a composition bias toward basic and acidic residues; that stretch reads DDLRKMQEEEARK. Residues 1378–1390 are compositionally biased toward acidic residues; the sequence is LDGEAPDDEEPEE. Low complexity predominate over residues 1396-1408; sequence GPAAGLSPSSPQP. A phosphoserine mark is found at Ser-1402 and Ser-1405. Basic and acidic residues predominate over residues 1418-1429; it reads AKAERRHQERLR. Phosphoserine is present on residues Ser-1432, Ser-1445, and Ser-1467. The tract at residues 1476 to 1524 is disordered; the sequence is QMVLSKSQEGRSRRGPLERLAEAPSPAPTPSPTPVEDLGLQTSTSPGRL. Basic and acidic residues predominate over residues 1483–1496; that stretch reads QEGRSRRGPLERLA. Residue Ser-1500 is modified to Phosphoserine. Position 1504 is a phosphothreonine (Thr-1504). Ser-1506, Ser-1520, and Ser-1550 each carry phosphoserine. The segment at 1581 to 1614 is disordered; the sequence is GRPSPGTVGPEEVTLCSSRRPVRPGRRGLGPVPS.

It belongs to the LAP (LRR and PDZ) protein family. As to quaternary structure, interacts with UBE3A. Interacts with PAK1 and PAK2. Interacts (via PDZ domains) with VANGL2. Interacts (via PDZ domains) with LPP and TRIP6; the interaction is direct. Interacts (via PDZ domains) with TJP2. Interacts (via PDZ domains) with APC; may mediate APC targeting to adherens junctions of epithelial cells. Interacts (via PDZ domains) with TSHR; regulates TSHR trafficking and function. Interacts with ARHGEF7 and GIT1; interacts directly with ARHGEF7. Interacts with CTNNB1. Interacts with MAPK12. Interacts (via PDZ domains 1 and 3) with MCC. Interacts with DLG5. Interacts with STK4/MST1 and LATS1 in the presence of DLG5. Interacts (via PDZ domain 3) with CRTAM (via PDZ-binding motif); the interaction promotes CRTAM and SCRIB polarization in a subset of CD4+ T-cells. Interacts with YES1, when YES1 is in a closed conformation; the interaction facilitates YES1 autophosphorylation. Interacts (via PDZ domains) with VIM; the interaction protects SCRIB from proteasomal degradation and facilitates SCRIB localization to intermediate filaments, the interaction is reduced by cell contact inhibition. In terms of processing, ubiquitinated; targeted for UBE3A-dependent multiubiquitination and degraded. Post-translationally, palmitoylated. Could be depalmitoylated by LYPLA1 and/or LYPLA2. Palmitoylation of SCRIB by ZDHHC7 is required for its localization to cell-cell junctions, function in the establishement of epithelial cell polarity and the regulation of downstream signaling pathways important for epithelial cell differentiation.

It is found in the cell membrane. It localises to the cell junction. The protein resides in the adherens junction. Its subcellular location is the cell projection. The protein localises to the lamellipodium. It is found in the cytoplasm. It localises to the postsynapse. The protein resides in the presynapse. In terms of biological role, scaffold protein involved in different aspects of polarized cell differentiation regulating epithelial and neuronal morphogenesis and T-cell polarization. Via its interaction with CRTAM, required for the late phase polarization of a subset of CD4+ T-cells, which in turn regulates TCR-mediated proliferation and IFNG and IL22 production. Plays a role in cell directional movement, cell orientation, cell sheet organization and Golgi complex polarization at the cell migration front. Promotes epithelial cell layer barrier function via maintaining cell-cell adhesion. Most probably functions in the establishment of apico-basal cell polarity. May function in cell proliferation regulating progression from G1 to S phase and as a positive regulator of apoptosis for instance during acinar morphogenesis of the mammary epithelium. May regulate cell invasion via MAPK-mediated cell migration and adhesion. May play a role in exocytosis and in the targeting of synaptic vesicles to synapses. Functions as an activator of Rac GTPase activity. This chain is Protein scribble homolog, found in Canis lupus familiaris (Dog).